Reading from the N-terminus, the 358-residue chain is Short chain dehydrogenase sor7 (358 aa).

Positions 1–22 (MSSPAIGQPPIPPTPTDANISG) are disordered. NADP(+)-binding residues include Leu-34, Asp-88, Asn-115, Tyr-206, Lys-210, Val-238, and Thr-240. The active-site Proton donor is Tyr-206. Lys-210 functions as the Lowers pKa of active site Tyr in the catalytic mechanism.

Belongs to the short-chain dehydrogenases/reductases (SDR) family.

It functions in the pathway secondary metabolite biosynthesis. Functionally, short chain dehydrogenase; part of the SOR gene cluster that mediates the biosynthesis of sorbicillinoids, a diverse group of yellow secondary metabolites that restrict growth of competing pathogenic fungi but not of bacteria. Sorbicillinoids biosynthesis requires the action of two PKSs. The SOR cluster is required for the production of trichodimerol and dihydrotrichotetronin, with sor2 being sufficient for production of trichodimerol, but not dihydrotrichotetronin in the light. Sor1 iteratively combines three acetyl units and the growing chain is modified by the ketoacyl reductase subunit, and optional by the enoyl reductase subunit in the second cycle. The polyketide is then handed over to the PKS sor2, which adds three more acetyl units, and two methyl groups. Sor2 releases an aldehyde, which undergoes spontaneous cyclization resulting in the formation of sorbicillin or 2',3'-dihydrosorbicillin. The monooxygenase sor5 oxidizes sorbicillin and 2',3'-dihydrosorbicillin to 2',3'-dihydrosorbicillinol and sorbicillinol, respectively. The oxidoreductase sor8 further converts sorbicillinol into oxosorbicillinol. Sorbicillinol is the building block for the other sorbicillinoids such as disorbicillinol, bisvertinolon, dihydrobisvertinolone, and dihydrotrichotetronine. The protein is Short chain dehydrogenase sor7 of Hypocrea jecorina (strain QM6a) (Trichoderma reesei).